A 928-amino-acid polypeptide reads, in one-letter code: Protein ARABIDILLO 2 (928 aa).

Residues 3–8 carry the Nuclear localization signal motif; the sequence is RRVRQR. Positions 37 to 83 constitute an F-box domain; sequence YVNWTSLPYDTVFHLFTRLNYRDRASLASTCRTWRSLGASSFLWSSL. ARM repeat units follow at residues 147 to 186, 237 to 278, 303 to 341, 370 to 409, 419 to 458, 460 to 499, 501 to 543, 545 to 585, 591 to 630, 632 to 674, 676 to 715, 717 to 757, and 824 to 864; these read AARH…KLRV, TSNI…KSSQ, KGKV…DLIR, SQGL…TFIV, CGRA…NLSV, AKVA…NLSV, EEHK…NLAA, DKCS…NLAA, GNNA…NLAF, DKNR…GLSV, EANS…NLSF, PGNA…YMFD, and IPEA…QFTI.

It belongs to the beta-catenin family. As to expression, expressed ubiquitously.

It is found in the nucleus. In terms of biological role, promotes lateral root initiation and development, independently of auxin (IAA) and abscisis acid (ABA). This chain is Protein ARABIDILLO 2, found in Arabidopsis thaliana (Mouse-ear cress).